The sequence spans 186 residues: Dual-action ribosomal maturation protein DarP (186 aa).

The protein belongs to the DarP family.

It localises to the cytoplasm. Member of a network of 50S ribosomal subunit biogenesis factors which assembles along the 30S-50S interface, preventing incorrect 23S rRNA structures from forming. Promotes peptidyl transferase center (PTC) maturation. The protein is Dual-action ribosomal maturation protein DarP of Proteus mirabilis (strain HI4320).